Reading from the N-terminus, the 88-residue chain is U1-hexatoxin-Iw1c (88 aa).

Positions 1–17 (LKFVVLICLVIMASTSA) are cleaved as a signal peptide. At Gln18 the chain carries Pyrrolidone carboxylic acid. Cystine bridges form between Cys20–Cys31, Cys25–Cys39, Cys30–Cys65, Cys49–Cys73, and Cys67–Cys80. Positions 86-88 (RSE) are excised as a propeptide.

It belongs to the MIT-like AcTx family. Expressed by the venom gland.

Its subcellular location is the secreted. This is U1-hexatoxin-Iw1c from Illawarra wisharti (Illawarra funnel-web spider).